The chain runs to 613 residues: DNA polymerase II small subunit (613 aa).

Belongs to the DNA polymerase delta/II small subunit family. Heterodimer of a large subunit and a small subunit.

The enzyme catalyses DNA(n) + a 2'-deoxyribonucleoside 5'-triphosphate = DNA(n+1) + diphosphate. It carries out the reaction Exonucleolytic cleavage in the 3'- to 5'-direction to yield nucleoside 5'-phosphates.. Functionally, possesses two activities: a DNA synthesis (polymerase) and an exonucleolytic activity that degrades single-stranded DNA in the 3' to 5' direction. Has a template-primer preference which is characteristic of a replicative DNA polymerase. This Pyrococcus furiosus (strain ATCC 43587 / DSM 3638 / JCM 8422 / Vc1) protein is DNA polymerase II small subunit (polB).